A 204-amino-acid chain; its full sequence is Dual-action ribosomal maturation protein DarP (204 aa).

2 disordered regions span residues 1–31 (MPPM…SKSQ) and 182–204 (GGAS…DDEA). Residues 186–204 (DSDDEAADDAGDDHDDDEA) show a composition bias toward acidic residues.

This sequence belongs to the DarP family.

The protein localises to the cytoplasm. Its function is as follows. Member of a network of 50S ribosomal subunit biogenesis factors which assembles along the 30S-50S interface, preventing incorrect 23S rRNA structures from forming. Promotes peptidyl transferase center (PTC) maturation. The polypeptide is Dual-action ribosomal maturation protein DarP (Burkholderia orbicola (strain MC0-3)).